Here is a 252-residue protein sequence, read N- to C-terminus: Triosephosphate isomerase (252 aa).

Residue 10–12 (NWK) coordinates substrate. Catalysis depends on histidine 96, which acts as the Electrophile. Glutamate 168 functions as the Proton acceptor in the catalytic mechanism. Substrate contacts are provided by residues glycine 174, serine 214, and 235–236 (GG).

The protein belongs to the triosephosphate isomerase family. As to quaternary structure, homodimer.

Its subcellular location is the cytoplasm. The enzyme catalyses D-glyceraldehyde 3-phosphate = dihydroxyacetone phosphate. It participates in carbohydrate biosynthesis; gluconeogenesis. Its pathway is carbohydrate degradation; glycolysis; D-glyceraldehyde 3-phosphate from glycerone phosphate: step 1/1. In terms of biological role, involved in the gluconeogenesis. Catalyzes stereospecifically the conversion of dihydroxyacetone phosphate (DHAP) to D-glyceraldehyde-3-phosphate (G3P). The chain is Triosephosphate isomerase from Streptococcus gordonii (strain Challis / ATCC 35105 / BCRC 15272 / CH1 / DL1 / V288).